The chain runs to 292 residues: Bifunctional protein FolD (292 aa).

NADP(+)-binding positions include 166–168 (GRS), serine 191, and isoleucine 232.

This sequence belongs to the tetrahydrofolate dehydrogenase/cyclohydrolase family. Homodimer.

It carries out the reaction (6R)-5,10-methylene-5,6,7,8-tetrahydrofolate + NADP(+) = (6R)-5,10-methenyltetrahydrofolate + NADPH. It catalyses the reaction (6R)-5,10-methenyltetrahydrofolate + H2O = (6R)-10-formyltetrahydrofolate + H(+). Its pathway is one-carbon metabolism; tetrahydrofolate interconversion. In terms of biological role, catalyzes the oxidation of 5,10-methylenetetrahydrofolate to 5,10-methenyltetrahydrofolate and then the hydrolysis of 5,10-methenyltetrahydrofolate to 10-formyltetrahydrofolate. This Synechococcus sp. (strain RCC307) protein is Bifunctional protein FolD.